The following is a 334-amino-acid chain: Holliday junction branch migration complex subunit RuvB (334 aa).

The interval 4–186 (ADRLIAPISN…FGIVQRLEYY (183 aa)) is large ATPase domain (RuvB-L). ATP is bound by residues isoleucine 25, arginine 26, glycine 67, lysine 70, threonine 71, threonine 72, 133–135 (EDY), arginine 176, tyrosine 186, and arginine 223. Threonine 71 contributes to the Mg(2+) binding site. Positions 187–257 (KVADLQHIVQ…TADRALNMLD (71 aa)) are small ATPAse domain (RuvB-S). Residues 260 to 334 (HQGFDYMDRK…RAYLHFGIEK (75 aa)) are head domain (RuvB-H). DNA-binding residues include arginine 315 and arginine 320.

Belongs to the RuvB family. Homohexamer. Forms an RuvA(8)-RuvB(12)-Holliday junction (HJ) complex. HJ DNA is sandwiched between 2 RuvA tetramers; dsDNA enters through RuvA and exits via RuvB. An RuvB hexamer assembles on each DNA strand where it exits the tetramer. Each RuvB hexamer is contacted by two RuvA subunits (via domain III) on 2 adjacent RuvB subunits; this complex drives branch migration. In the full resolvosome a probable DNA-RuvA(4)-RuvB(12)-RuvC(2) complex forms which resolves the HJ.

The protein resides in the cytoplasm. It catalyses the reaction ATP + H2O = ADP + phosphate + H(+). Functionally, the RuvA-RuvB-RuvC complex processes Holliday junction (HJ) DNA during genetic recombination and DNA repair, while the RuvA-RuvB complex plays an important role in the rescue of blocked DNA replication forks via replication fork reversal (RFR). RuvA specifically binds to HJ cruciform DNA, conferring on it an open structure. The RuvB hexamer acts as an ATP-dependent pump, pulling dsDNA into and through the RuvAB complex. RuvB forms 2 homohexamers on either side of HJ DNA bound by 1 or 2 RuvA tetramers; 4 subunits per hexamer contact DNA at a time. Coordinated motions by a converter formed by DNA-disengaged RuvB subunits stimulates ATP hydrolysis and nucleotide exchange. Immobilization of the converter enables RuvB to convert the ATP-contained energy into a lever motion, pulling 2 nucleotides of DNA out of the RuvA tetramer per ATP hydrolyzed, thus driving DNA branch migration. The RuvB motors rotate together with the DNA substrate, which together with the progressing nucleotide cycle form the mechanistic basis for DNA recombination by continuous HJ branch migration. Branch migration allows RuvC to scan DNA until it finds its consensus sequence, where it cleaves and resolves cruciform DNA. The sequence is that of Holliday junction branch migration complex subunit RuvB from Vibrio cholerae serotype O1 (strain ATCC 39315 / El Tor Inaba N16961).